The chain runs to 88 residues: Antitoxin HipB (88 aa).

The 55-residue stretch at 17–71 (MKLVRQQNGWTQSELAKKIGIKQATISNFENNPDNTTLTTFFKILQSLELSMTLC) folds into the HTH cro/C1-type domain. The segment at residues 21 to 47 (RQQNGWTQSELAKKIGIKQATISNFEN) is a DNA-binding region (H-T-H motif).

Homodimer. Binds operator DNA sites in the absence of HipA, inducing a 70 degree bend in consecutive operators and deforming DNA between the operators so that HipB dimers bind on opposite faces of the DNA. Forms a HipA(2)HipB(2) heterotetramer which can interact with a single operator site on DNA, inducing a 70 degree bend. When 2 operators are present each HipB dimer contacts 1 HipA molecule, which are brought together by the DNA bend and dimerize, blocking the HipA active site and inactivating its toxic activity. HipA-HipB-induced bending also distorts the -35 and -10 boxes of the promoter and probably prevents sigma-factor binding, and additionally bound HipB and HipA block RNA polymerase access to the -35 box, thus repressing the operon. This complex also blocks the toxic activity of HipA. Mutations present in allele hipA7 (G22S and D291A) decrease the affinity of HipA for HipB. In terms of processing, degraded by Lon protease in vivo; half-life is 17 minutes in wild-type cells and over 200 minutes in a lon deletion strain. In vitro degradation by Lon is Mg(2+)-ATP-dependent.

Its activity is regulated as follows. Degraded by Lon protease; degradation is inhibited in a HipA-HipB complex and when bound to the operator consensus sequence dsDNA. In terms of biological role, antitoxin component of a type II toxin-antitoxin (TA) system. Neutralizes the toxic effect of cognate toxin HipA. Also neutralizes the toxic effect of non-cognate toxin YjjJ. Binds to operator sites with the consensus sequence 5-'TATCCN(8)GGATA-3' to repress the hipBA operon promoter; binding of HipB(2) to DNA induces a 70 degree bend. This forces HipA dimerization, which blocks HipA's active site and thus its toxic action. May play a role in biofilm formation. This chain is Antitoxin HipB (hipB), found in Escherichia coli (strain K12).